The sequence spans 179 residues: Large ribosomal subunit protein uL5 (179 aa).

It belongs to the universal ribosomal protein uL5 family. As to quaternary structure, part of the 50S ribosomal subunit; part of the 5S rRNA/L5/L18/L25 subcomplex. Contacts the 5S rRNA and the P site tRNA. Forms a bridge to the 30S subunit in the 70S ribosome.

Functionally, this is one of the proteins that bind and probably mediate the attachment of the 5S RNA into the large ribosomal subunit, where it forms part of the central protuberance. In the 70S ribosome it contacts protein S13 of the 30S subunit (bridge B1b), connecting the 2 subunits; this bridge is implicated in subunit movement. Contacts the P site tRNA; the 5S rRNA and some of its associated proteins might help stabilize positioning of ribosome-bound tRNAs. This Buchnera aphidicola subsp. Cinara cedri (strain Cc) protein is Large ribosomal subunit protein uL5.